The primary structure comprises 754 residues: Nitrate reductase (754 aa).

The segment at residues 1 to 31 (MKFTRRSFVKASALATAMVAAGCSPQPVAPK) is a signal peptide (tat-type signal). A 4Fe-4S Mo/W bis-MGD-type domain is found at 39 to 95 (ATWYKTVCRYCGVGCGVMVAAKDNRVVAVKGDTENPVNKGLLCVKGYYLDRIMNTEE). 4 residues coordinate [4Fe-4S] cluster: Cys-46, Cys-49, Cys-53, and Cys-81. Mo-bis(molybdopterin guanine dinucleotide)-binding positions include Lys-83, Gln-144, Asn-169, Cys-173, 256-258 (GTD), Met-341, Gln-345, Asn-451, Lys-497, Asp-524, 642-651 (TGRILEHWHT), Asn-728, and Lys-745.

It belongs to the prokaryotic molybdopterin-containing oxidoreductase family. NasA/NapA/NarB subfamily. As to quaternary structure, component of the nitrate reductase NapAB complex composed of NapA and NapB. [4Fe-4S] cluster is required as a cofactor. Mo-bis(molybdopterin guanine dinucleotide) serves as cofactor. Predicted to be exported by the Tat system. The position of the signal peptide cleavage has not been experimentally proven.

The protein resides in the secreted. The catalysed reaction is 2 Fe(II)-[cytochrome] + nitrate + 2 H(+) = 2 Fe(III)-[cytochrome] + nitrite + H2O. In terms of biological role, catalytic subunit of the nitrate reductase complex NapAB. Receives electrons from NapB and catalyzes the reduction of nitrate to nitrite. The sequence is that of Nitrate reductase from Symbiobacterium thermophilum (strain DSM 24528 / JCM 14929 / IAM 14863 / T).